Here is a 38-residue protein sequence, read N- to C-terminus: Exendin-1 (38 aa).

An O-linked (HexNAc...) serine; in Exendin-1 and Exendin-1b glycan is attached at Ser32.

This sequence belongs to the glucagon family. In terms of processing, O-linked glycan consists of Hex-HexNAc saccharide. Post-translationally, glycosylation may be of interest for the biological stability of exendin-1 and exendin-1b. Expressed by the venom gland.

Its subcellular location is the secreted. Its function is as follows. O-linked and free exendin-1 and exendin-1b have vasoactive intestinal peptide(VIP)/secretin-like biological activities. They interact with rat and human VIP receptors 1 (VIPR1) and 2 (VIPR2), with the highest affinity for the human VIPR2. They induce hypotension that is mediated by relaxation of cardiac smooth muscle. The sequence is that of Exendin-1 from Heloderma horridum horridum (Mexican beaded lizard).